The sequence spans 184 residues: MAGEHVILLDEQDQPAGMLEKYAAHTFDTPLHLAFSCWLFNQQGQLLVTRRSLGKKAWPGVWTNSVCGHPQQGETFEQAVTRRCRFELGVEISDIAPVHPAFRYRAVAPNGIVENEVCPVYAARVVSEVQPNDDEVMDYQWVDLATMLSALAATPWAFSPWMVLEAENRDARQALTDFVARLRG.

Histidine 25 and histidine 32 together coordinate Mn(2+). A Nudix hydrolase domain is found at 30-164 (PLHLAFSCWL…PWAFSPWMVL (135 aa)). Residue cysteine 67 is part of the active site. Position 69 (histidine 69) interacts with Mn(2+). Glutamate 87 is a Mg(2+) binding site. Mn(2+) is bound by residues glutamate 114 and glutamate 116. Glutamate 116 is an active-site residue.

The protein belongs to the IPP isomerase type 1 family. In terms of assembly, homodimer. Requires Mg(2+) as cofactor. It depends on Mn(2+) as a cofactor.

The protein localises to the cytoplasm. It carries out the reaction isopentenyl diphosphate = dimethylallyl diphosphate. Its pathway is isoprenoid biosynthesis; dimethylallyl diphosphate biosynthesis; dimethylallyl diphosphate from isopentenyl diphosphate: step 1/1. Catalyzes the 1,3-allylic rearrangement of the homoallylic substrate isopentenyl (IPP) to its highly electrophilic allylic isomer, dimethylallyl diphosphate (DMAPP). This Klebsiella pneumoniae subsp. pneumoniae (strain ATCC 700721 / MGH 78578) protein is Isopentenyl-diphosphate Delta-isomerase.